A 992-amino-acid chain; its full sequence is Presequence protease, mitochondrial (992 aa).

The transit peptide at 1–30 directs the protein to the mitochondrion; it reads MNYAKLSIAFSKKTIKTHNCRLFQRWLHVG. Histidine 91 provides a ligand contact to Zn(2+). Glutamate 94 acts as the Proton acceptor in catalysis. Histidine 95 contributes to the Zn(2+) binding site. The active site involves glutamate 167. Position 192 (glutamate 192) interacts with Zn(2+).

Belongs to the peptidase M16 family. PreP subfamily. Monomer and homodimer; homodimerization is induced by binding of the substrate. Requires Zn(2+) as cofactor.

It localises to the mitochondrion intermembrane space. The protein localises to the mitochondrion matrix. In terms of biological role, degrades mitochondrial transit peptides after their cleavage in the intermembrane space or in the matrix, and presequence peptides; clearance of these peptides is required to keep the presequence processing machinery running. Preferentially cleaves the N-terminal side of paired basic amino acid residues. Also degrades other unstructured peptides. May function as an ATP-dependent peptidase as opposed to a metalloendopeptidase. The chain is Presequence protease, mitochondrial (cym1) from Schizosaccharomyces pombe (strain 972 / ATCC 24843) (Fission yeast).